The chain runs to 410 residues: MLLAIAFLASVCVSSRSDQENPFIFKSNRFQTLYENENGHIRLLQKFDKRSKIFENLQNYRLLEYKSKPHTLFLPQYTDADFILVVLSGKATLTVLKSNDRNSFNLERGDAIKLPAGSIAYFANRDDNEEPRVLDLAIPVNKPGQLQSFLLSGTQNQKSSLSGFSKNILEAAFNTNYEEIEKVLLEQQEQEPQHRRSLKDRRQEINEENVIVKVSRDQIEELSKNAKSSSKKSVSSESGPFNLRSRNPIYSNKFGKFFEITPEKNQQLQDLDIFVNSVDIKVGSLLLPNYNSRAIVIVTVTEGKGDFELVGQRNENQGKENDKEEEQEEETSKQVQLYRAKLSPGDVFVIPAGHPVAINASSDLNLIGLGINAENNERNFLAGEEDNVISQVERPVKELAFPGSSHEVDR.

Residues Met1–Ser15 form the signal peptide. Positions Phe23–Glu181 constitute a Cupin type-1 1 domain. 2 disordered regions span residues Ser223–Asn242 and Gln312–Thr331. Positions Asn225–Ser238 are enriched in low complexity. Positions Phe241–Asp409 constitute a Cupin type-1 2 domain. N-linked (GlcNAc...) asparagine glycosylation is present at Asn359.

Belongs to the 7S seed storage protein family.

It localises to the vacuole. The protein localises to the aleurone grain. Seed storage protein. The protein is Provicilin of Pisum sativum (Garden pea).